We begin with the raw amino-acid sequence, 459 residues long: Argininosuccinate lyase (459 aa).

This sequence belongs to the lyase 1 family. Argininosuccinate lyase subfamily.

Its subcellular location is the cytoplasm. It catalyses the reaction 2-(N(omega)-L-arginino)succinate = fumarate + L-arginine. Its pathway is amino-acid biosynthesis; L-arginine biosynthesis; L-arginine from L-ornithine and carbamoyl phosphate: step 3/3. The protein is Argininosuccinate lyase of Staphylococcus aureus (strain MSSA476).